A 717-amino-acid chain; its full sequence is Ribosomal RNA large subunit methyltransferase K/L (717 aa).

Positions 44-155 (DAYKVCIYSY…KQFVNVFLCL (112 aa)) constitute a THUMP domain.

The protein belongs to the methyltransferase superfamily. RlmKL family.

It localises to the cytoplasm. The catalysed reaction is guanosine(2445) in 23S rRNA + S-adenosyl-L-methionine = N(2)-methylguanosine(2445) in 23S rRNA + S-adenosyl-L-homocysteine + H(+). The enzyme catalyses guanosine(2069) in 23S rRNA + S-adenosyl-L-methionine = N(2)-methylguanosine(2069) in 23S rRNA + S-adenosyl-L-homocysteine + H(+). Specifically methylates the guanine in position 2445 (m2G2445) and the guanine in position 2069 (m7G2069) of 23S rRNA. This chain is Ribosomal RNA large subunit methyltransferase K/L, found in Francisella tularensis subsp. tularensis (strain WY96-3418).